A 490-amino-acid chain; its full sequence is ATP synthase subunit beta, chloroplastic (490 aa).

170-177 serves as a coordination point for ATP; that stretch reads GGAGVGKT.

Belongs to the ATPase alpha/beta chains family. As to quaternary structure, F-type ATPases have 2 components, CF(1) - the catalytic core - and CF(0) - the membrane proton channel. CF(1) has five subunits: alpha(3), beta(3), gamma(1), delta(1), epsilon(1). CF(0) has four main subunits: a(1), b(1), b'(1) and c(9-12).

It is found in the plastid. The protein resides in the chloroplast thylakoid membrane. It catalyses the reaction ATP + H2O + 4 H(+)(in) = ADP + phosphate + 5 H(+)(out). Produces ATP from ADP in the presence of a proton gradient across the membrane. The catalytic sites are hosted primarily by the beta subunits. In Ipomoea aquatica (Water spinach), this protein is ATP synthase subunit beta, chloroplastic.